Reading from the N-terminus, the 435-residue chain is Probable xyloglucan galactosyltransferase GT19 (435 aa).

The Cytoplasmic segment spans residues 1-6 (MASKST). A helical; Signal-anchor for type II membrane protein transmembrane segment spans residues 7–23 (VTTLTIFFFFFFFFIEP). Over 24–435 (KVQSQQISAV…GVLDRIISRV (412 aa)) the chain is Lumenal. Residues N140, N203, and N277 are each glycosylated (N-linked (GlcNAc...) asparagine).

Belongs to the glycosyltransferase 47 family. In terms of tissue distribution, expressed in roots, hypocotyls, cotyledons, leaves, stems, stamens and pollen grains.

Its subcellular location is the golgi apparatus membrane. Its function is as follows. Functions in xyloglucan synthesis by adding side chains to the xylosylated glucan backbone. Involved in the galactosylation of hemicellulose xyloglucan. The sequence is that of Probable xyloglucan galactosyltransferase GT19 from Arabidopsis thaliana (Mouse-ear cress).